A 619-amino-acid polypeptide reads, in one-letter code: Dihydroxy-acid dehydratase 1 (619 aa).

Residue Asp-81 coordinates Mg(2+). Residue Cys-122 participates in [2Fe-2S] cluster binding. Mg(2+) is bound by residues Asp-123 and Lys-124. At Lys-124 the chain carries N6-carboxylysine. Cys-198 is a [2Fe-2S] cluster binding site. Glu-494 contributes to the Mg(2+) binding site. Ser-520 acts as the Proton acceptor in catalysis.

The protein belongs to the IlvD/Edd family. Homodimer. The cofactor is [2Fe-2S] cluster. Mg(2+) is required as a cofactor.

It catalyses the reaction (2R)-2,3-dihydroxy-3-methylbutanoate = 3-methyl-2-oxobutanoate + H2O. It carries out the reaction (2R,3R)-2,3-dihydroxy-3-methylpentanoate = (S)-3-methyl-2-oxopentanoate + H2O. It participates in amino-acid biosynthesis; L-isoleucine biosynthesis; L-isoleucine from 2-oxobutanoate: step 3/4. The protein operates within amino-acid biosynthesis; L-valine biosynthesis; L-valine from pyruvate: step 3/4. Functionally, functions in the biosynthesis of branched-chain amino acids. Catalyzes the dehydration of (2R,3R)-2,3-dihydroxy-3-methylpentanoate (2,3-dihydroxy-3-methylvalerate) into 2-oxo-3-methylpentanoate (2-oxo-3-methylvalerate) and of (2R)-2,3-dihydroxy-3-methylbutanoate (2,3-dihydroxyisovalerate) into 2-oxo-3-methylbutanoate (2-oxoisovalerate), the penultimate precursor to L-isoleucine and L-valine, respectively. The polypeptide is Dihydroxy-acid dehydratase 1 (Bordetella pertussis (strain Tohama I / ATCC BAA-589 / NCTC 13251)).